A 610-amino-acid chain; its full sequence is Elongation factor 4 (610 aa).

The tr-type G domain occupies 11–193 (EKIRNFSIIA…QIVEKVPAPT (183 aa)). Residues 23–28 (DHGKST) and 140–143 (NKID) each bind GTP.

The protein belongs to the TRAFAC class translation factor GTPase superfamily. Classic translation factor GTPase family. LepA subfamily.

It localises to the cell membrane. It carries out the reaction GTP + H2O = GDP + phosphate + H(+). Functionally, required for accurate and efficient protein synthesis under certain stress conditions. May act as a fidelity factor of the translation reaction, by catalyzing a one-codon backward translocation of tRNAs on improperly translocated ribosomes. Back-translocation proceeds from a post-translocation (POST) complex to a pre-translocation (PRE) complex, thus giving elongation factor G a second chance to translocate the tRNAs correctly. Binds to ribosomes in a GTP-dependent manner. This is Elongation factor 4 from Streptococcus pyogenes serotype M1.